A 113-amino-acid chain; its full sequence is Large ribosomal subunit protein bL17 (113 aa).

This sequence belongs to the bacterial ribosomal protein bL17 family. Part of the 50S ribosomal subunit. Contacts protein L32.

The polypeptide is Large ribosomal subunit protein bL17 (Clostridium perfringens (strain ATCC 13124 / DSM 756 / JCM 1290 / NCIMB 6125 / NCTC 8237 / Type A)).